The sequence spans 505 residues: ATP synthase subunit alpha (505 aa).

G170–T177 provides a ligand contact to ATP.

The protein belongs to the ATPase alpha/beta chains family. In terms of assembly, F-type ATPases have 2 components, CF(1) - the catalytic core - and CF(0) - the membrane proton channel. CF(1) has five subunits: alpha(3), beta(3), gamma(1), delta(1), epsilon(1). CF(0) has four main subunits: a(1), b(1), b'(1) and c(9-12).

The protein resides in the cellular thylakoid membrane. The catalysed reaction is ATP + H2O + 4 H(+)(in) = ADP + phosphate + 5 H(+)(out). Produces ATP from ADP in the presence of a proton gradient across the membrane. The alpha chain is a regulatory subunit. This is ATP synthase subunit alpha from Prochlorococcus marinus (strain SARG / CCMP1375 / SS120).